Reading from the N-terminus, the 1322-residue chain is Chitin synthase chs-1 (1322 aa).

Residues 1–39 (MNDGENYWNAFRSHKRSATDGPTLSPWMVTVLQATKLLL) lie on the Extracellular side of the membrane. Residues 40–60 (FALCNIVLTLGSVFSKLIVLI) traverse the membrane as a helical segment. The Cytoplasmic portion of the chain corresponds to 61–128 (MATNIVPRAH…KGQCGQLVKS (68 aa)). Residues 129 to 149 (VVVLESLRAIGLAVLSFHVFP) form a helical membrane-spanning segment. Over 150–156 (QLDLARC) the chain is Extracellular. A helical transmembrane segment spans residues 157–177 (LVLSACFPLVAVLQRSLVAMV). Residues 178–193 (SAARTGRSFRNRLGRC) are Cytoplasmic-facing. A helical transmembrane segment spans residues 194–214 (FVAIPHVIMFLVLMSSCYVWA). Topologically, residues 215-221 (LFDNKFT) are extracellular. Residues 222–242 (AIIALPIGVICTSAGFWESWI) traverse the membrane as a helical segment. The Cytoplasmic portion of the chain corresponds to 243 to 269 (DTTHSGTSFDELYRLKYAVRKMNTTTK). The chain crosses the membrane as a helical span at residues 270 to 290 (LIVSLMRIVCTVSVLVSAVYI). The Extracellular segment spans residues 291–316 (NDHKKLNSSHFVKAFFSFSTRQPHTR). Residue Asn297 is glycosylated (N-linked (GlcNAc...) asparagine). A helical transmembrane segment spans residues 317–337 (LLLLATGIIVLHFVMRGISRF). The Cytoplasmic portion of the chain corresponds to 338-342 (LAALD). Residues 343-363 (LHPFSFVHPLSIAPLIAYGYV) traverse the membrane as a helical segment. The Extracellular segment spans residues 364–396 (RYACQSPTCSIARRLARFGLHWVCDQWFQSARG). Residues 397 to 417 (IASPDFYICLIWLLVGCYRGW) form a helical membrane-spanning segment. At 418 to 836 (RLVRQRYFDT…AISYAYIAYQ (419 aa)) the chain is on the cytoplasmic side. Residues 455-486 (LNRQEKTMLTEEEDISDENDELRIRNDEVDRV) are a coiled coil. Residues 837–857 (FLVIFFSMLGPAIIFTMLVFA) traverse the membrane as a helical segment. Residues 858 to 865 (QVAAFELR) are Extracellular-facing. The chain crosses the membrane as a helical span at residues 866-886 (GSDVMLYNGIPIGFFIVLCFT). Residues 887 to 892 (TESNIQ) are Cytoplasmic-facing. A helical membrane pass occupies residues 893-913 (LIYAKYMSIAYAFVMLAVLVA). The Extracellular portion of the chain corresponds to 914–922 (TSSQIVLET). A helical membrane pass occupies residues 923-943 (VLAPTSLFIVTMVGIFFFAAC). Residues 944 to 951 (LHPKEFTN) lie on the Cytoplasmic side of the membrane. A helical membrane pass occupies residues 952–972 (IIHGVVFFLMIPSTYVFLTLY). Over 973-1148 (SLINLNVITW…AVAEGLASLR (176 aa)) the chain is Extracellular. Residues 1019-1053 (ISCREKKEHEERREKMEKKMQRMELALRSIESGAD) adopt a coiled-coil conformation. A helical membrane pass occupies residues 1149–1169 (NQIAFTILLVNSLLALAIFLI). At 1170–1209 (QKHKNVLSIKFSPIKNFRWTKMNEMTGQYEETDEPLKIDP) the chain is on the cytoplasmic side. The chain crosses the membrane as a helical span at residues 1210 to 1230 (LGMGIVVFLLIILFVQTLGML). The Extracellular portion of the chain corresponds to 1231–1322 (LHRLNTMIGA…MQRSALSTTE (92 aa)).

Belongs to the chitin synthase family. Class IV subfamily.

Its subcellular location is the cell membrane. It carries out the reaction [(1-&gt;4)-N-acetyl-beta-D-glucosaminyl](n) + UDP-N-acetyl-alpha-D-glucosamine = [(1-&gt;4)-N-acetyl-beta-D-glucosaminyl](n+1) + UDP + H(+). Its function is as follows. Essential for the embryonic synthesis of chitin, a component of the eggshell. The chain is Chitin synthase chs-1 from Caenorhabditis elegans.